We begin with the raw amino-acid sequence, 294 residues long: Elongation factor Ts (294 aa).

Positions 80–83 (TDFV) are involved in Mg(2+) ion dislocation from EF-Tu.

This sequence belongs to the EF-Ts family.

The protein resides in the cytoplasm. Its function is as follows. Associates with the EF-Tu.GDP complex and induces the exchange of GDP to GTP. It remains bound to the aminoacyl-tRNA.EF-Tu.GTP complex up to the GTP hydrolysis stage on the ribosome. The sequence is that of Elongation factor Ts from Listeria monocytogenes serotype 4b (strain CLIP80459).